The chain runs to 323 residues: MAQEYTVEQLNHGRKVYDFMRWDYWAFGISGLLLIAAIVIMGVRGFNWGLDFTGGTVIEITLEKPAEIDVMRDALQKAGFEEPMLQNFGSSHDIMVRMPPAEGETGGQVLGSQVLKVINESTNQNAAVKRIEFVGPSVGADLAQTGAMALMAALLSILVYVGFRFEWRLAAGVVIALAHDVIITLGILSLFHIEIDLTIVASLMSVIGYSLNDSIVVSDRIRENFRKIRRGTPYEIFNVSLTQTLHRTLITSGTTLMVILMLYLFGGPVLEGFSLTMLIGVSIGTASSIYVASALALKLGMKREHMLQQKVEKEGADQPSILP.

Over 1–22 (MAQEYTVEQLNHGRKVYDFMRW) the chain is Cytoplasmic. A helical membrane pass occupies residues 23-43 (DYWAFGISGLLLIAAIVIMGV). The Periplasmic portion of the chain corresponds to 44-142 (RGFNWGLDFT…FVGPSVGADL (99 aa)). Residues 143-163 (AQTGAMALMAALLSILVYVGF) form a helical membrane-spanning segment. Over 164–170 (RFEWRLA) the chain is Cytoplasmic. The helical transmembrane segment at 171–191 (AGVVIALAHDVIITLGILSLF) threads the bilayer. Residues 192 to 196 (HIEID) are Periplasmic-facing. Residues 197-217 (LTIVASLMSVIGYSLNDSIVV) traverse the membrane as a helical segment. Residues 218–247 (SDRIRENFRKIRRGTPYEIFNVSLTQTLHR) are Cytoplasmic-facing. Residues 248–270 (TLITSGTTLMVILMLYLFGGPVL) traverse the membrane as a helical segment. Over 271 to 280 (EGFSLTMLIG) the chain is Periplasmic. A helical transmembrane segment spans residues 281 to 301 (VSIGTASSIYVASALALKLGM). Residues 302–323 (KREHMLQQKVEKEGADQPSILP) lie on the Cytoplasmic side of the membrane.

It belongs to the SecD/SecF family. SecF subfamily. Forms a complex with SecD. Part of the essential Sec protein translocation apparatus which comprises SecA, SecYEG and auxiliary proteins SecDF-YajC and YidC.

It localises to the cell inner membrane. In terms of biological role, part of the Sec protein translocase complex. Interacts with the SecYEG preprotein conducting channel. SecDF uses the proton motive force (PMF) to complete protein translocation after the ATP-dependent function of SecA. This chain is Protein translocase subunit SecF, found in Escherichia coli O157:H7.